A 216-amino-acid chain; its full sequence is Probable transaldolase (216 aa).

Residue K83 is the Schiff-base intermediate with substrate of the active site.

Belongs to the transaldolase family. Type 3B subfamily.

The protein resides in the cytoplasm. It catalyses the reaction D-sedoheptulose 7-phosphate + D-glyceraldehyde 3-phosphate = D-erythrose 4-phosphate + beta-D-fructose 6-phosphate. Its pathway is carbohydrate degradation; pentose phosphate pathway; D-glyceraldehyde 3-phosphate and beta-D-fructose 6-phosphate from D-ribose 5-phosphate and D-xylulose 5-phosphate (non-oxidative stage): step 2/3. In terms of biological role, transaldolase is important for the balance of metabolites in the pentose-phosphate pathway. The chain is Probable transaldolase from Symbiobacterium thermophilum (strain DSM 24528 / JCM 14929 / IAM 14863 / T).